Here is a 456-residue protein sequence, read N- to C-terminus: MMPLAVLQVKRLQPKLITPAKLTPQETKFLSDIDDQEFLRFQVPIIMCYKDNPSLNKNLNPVKVIREALSRALVYYYPLARRLREGPNRKLMVDCNGEGILFIEASADVTLEQLGDKMLPPCPLLEEFLFNFPGSGGIIGCPLVLVQMMTCLTCGGFILALRLNHTMCDAAGLLLFLTAIAEMARGAHAPSILPVWERELLFAPDPPRITCAHHEYEDVIGHSDGSYASSNQSNMVQRSFYFGAKEMRVLRKQIPPHLTSTCSTFDLITACLWKYRTLALNINPKEAVRVSCIVNARGKHNNVRLPLGYYGNAFAFPAAISKAEPLCKNPLGYALELVKKAKATMNEEYLRSVADLLVLRGRPQYSSTGSYLIVSDNTRAGFGDVNFGWGQPVFAGPAKALDLISFYVQHKNNTEDGILVPMCLPSSAMERFQQELERITREPKEDICNNLRSTSQ.

Active-site proton acceptor residues include His165 and Asn386.

This sequence belongs to the plant acyltransferase family. As to expression, expressed at very low levels in the skin of ripe fruit.

Functionally, involved in the biosynthesis of volatile esters which confer ripe apple fruit flavor. Alcohol acyl transferase that can use a wide range of alcohols as substrate to produce esters. The chain is Alcohol acyl transferase 1 allele GSc from Malus domestica (Apple).